A 404-amino-acid polypeptide reads, in one-letter code: MDTPPNVLSQQITDAVSKKGPVVRIGINEVAVTDTSLARTLYASFLKWPEWYESPKEKLFYGEPSLFGMTQPKEHSARRRILSNVFSKSLRSSTHVQNVTREILVERMIRQAQIPSGRSVVRDVRPVHEAFDMDFLTAFAFTPAFSTQFLNESDKFSEFRSWLRELRGGSPDAAKEAKCKLENWCLDMCRAYRASLTPTHQRISHCTADALYGAGLQESEVAAELLDHFITAKKNLAVVHTYSVYMLSIYTEVQERLRSELRSLSLDKLSIDDLASLPFFSAVISEVMRTHTEIKALTPRLVPAGGYWIPQRISGQSTFLPAGTVVSSAREALHLNEEIFPQPLSFWPERWLESADPKLAGKAQPQEMQNHLWYFGSGTHGCVAREYALYGETKLQFYMESAEL.

Cys382 provides a ligand contact to heme.

This sequence belongs to the cytochrome P450 family. It depends on heme as a cofactor.

The protein operates within secondary metabolite biosynthesis. In terms of biological role, cytochrome P450 monooxygenase; part of the cluster that mediates the biosynthesis of a highly modified cyclo-arginine-tryptophan dipeptide (cRW). The first step of the pathway is perfornmed by the arginine-containing cyclodipeptide synthase (RCPDS) avaA that acts as the scaffold-generating enzyme and is responsible for formation of the cyclo-Arg-Trp (cRW) diketopiperazine. AvaB then acts as a multifunctional flavoenzyme that is responsible for generating the cyclo-Arg-formylkynurenine DKP, which can be deformylated by avaC. AvaB then further catalyzes an additional N-oxidation followed by cyclization and dehydration. The next step is an N-acetylation of the guanidine group catalyzed by the arginine N-acetyltransferase avaD. The roles of the additional enzymes identified within the ava cluster still have to be determined. The chain is Cytochrome P450 monooxygenase avaI from Aspergillus versicolor.